Here is a 269-residue protein sequence, read N- to C-terminus: Phosphonoacetaldehyde hydrolase (269 aa).

Catalysis depends on aspartate 10, which acts as the Nucleophile. Mg(2+) is bound by residues aspartate 10 and alanine 12. Lysine 52 (schiff-base intermediate with substrate) is an active-site residue. A Mg(2+)-binding site is contributed by aspartate 186.

The protein belongs to the HAD-like hydrolase superfamily. PhnX family. Homodimer. Mg(2+) serves as cofactor.

The enzyme catalyses phosphonoacetaldehyde + H2O = acetaldehyde + phosphate + H(+). Functionally, involved in phosphonate degradation. In Salmonella typhimurium (strain LT2 / SGSC1412 / ATCC 700720), this protein is Phosphonoacetaldehyde hydrolase (phnX).